The sequence spans 781 residues: Death domain-containing protein 1 (781 aa).

2 consecutive ZU5 domains span residues 167 to 301 and 302 to 483; these read IMEK…VSCL and KKES…VLHL. The 86-residue stretch at 679-764 folds into the Death domain; the sequence is DNLLHWLAEE…DLAEELKFKW (86 aa).

This chain is Death domain-containing protein 1 (DTHD1), found in Homo sapiens (Human).